Here is a 134-residue protein sequence, read N- to C-terminus: Lymphocyte antigen 6A-2/6E-1 (134 aa).

The signal sequence occupies residues 1–26; that stretch reads MDTSHTTKSCLLILLVALLCAERAQG. The 93-residue stretch at 27–119 folds into the UPAR/Ly6 domain; the sequence is LECYQCYGVP…NGGSTWTMAG (93 aa). 5 disulfide bridges follow: Cys29–Cys53, Cys32–Cys41, Cys46–Cys74, Cys78–Cys98, and Cys99–Cys104. A lipid anchor (GPI-anchor amidated glycine) is attached at Gly112. The propeptide at 113–134 is removed in mature form; it reads STWTMAGVLLFSLSSVLLQTLL.

Post-translationally, O-glycosylated. Not N-glycosylated. In terms of processing, not phosphorylated. Widely expressed.

Its subcellular location is the cell membrane. Functionally, T-cell activation. This Mus musculus (Mouse) protein is Lymphocyte antigen 6A-2/6E-1 (Ly6a).